The sequence spans 585 residues: CTP synthase (585 aa).

Positions 1 to 281 (MPALRKHPHT…DAYVVRRLNL (281 aa)) are amidoligase domain. A CTP-binding site is contributed by serine 23. Position 23 (serine 23) interacts with UTP. ATP-binding positions include 24 to 29 (SLGKGL) and aspartate 81. Residues aspartate 81 and glutamate 155 each coordinate Mg(2+). CTP contacts are provided by residues 162–164 (DIE), 202–207 (KTKPTQ), and lysine 238. UTP contacts are provided by residues 202–207 (KTKPTQ) and lysine 238. The 249-residue stretch at 306 to 554 (RIALVGKYID…VGAAVEYNNG (249 aa)) folds into the Glutamine amidotransferase type-1 domain. Glycine 369 is an L-glutamine binding site. Cysteine 396 functions as the Nucleophile; for glutamine hydrolysis in the catalytic mechanism. Residues 397–400 (LGLQ), glutamate 419, and arginine 480 each bind L-glutamine. Catalysis depends on residues histidine 527 and glutamate 529. Residues 564–585 (IPTADHQSNGAEHALEDAPARG) form a disordered region. Residues 576 to 585 (HALEDAPARG) show a composition bias toward basic and acidic residues.

This sequence belongs to the CTP synthase family. Homotetramer.

The catalysed reaction is UTP + L-glutamine + ATP + H2O = CTP + L-glutamate + ADP + phosphate + 2 H(+). The enzyme catalyses L-glutamine + H2O = L-glutamate + NH4(+). It carries out the reaction UTP + NH4(+) + ATP = CTP + ADP + phosphate + 2 H(+). The protein operates within pyrimidine metabolism; CTP biosynthesis via de novo pathway; CTP from UDP: step 2/2. Allosterically activated by GTP, when glutamine is the substrate; GTP has no effect on the reaction when ammonia is the substrate. The allosteric effector GTP functions by stabilizing the protein conformation that binds the tetrahedral intermediate(s) formed during glutamine hydrolysis. Inhibited by the product CTP, via allosteric rather than competitive inhibition. Functionally, catalyzes the ATP-dependent amination of UTP to CTP with either L-glutamine or ammonia as the source of nitrogen. Regulates intracellular CTP levels through interactions with the four ribonucleotide triphosphates. The sequence is that of CTP synthase from Mycolicibacterium gilvum (strain PYR-GCK) (Mycobacterium gilvum (strain PYR-GCK)).